We begin with the raw amino-acid sequence, 399 residues long: Probable dual-specificity RNA methyltransferase RlmN (399 aa).

The active-site Proton acceptor is the glutamate 102. Residues 108 to 385 (YLDRATVCVS…CTVRVERGVA (278 aa)) enclose the Radical SAM core domain. The cysteines at positions 115 and 390 are disulfide-linked. Positions 122, 126, and 129 each coordinate [4Fe-4S] cluster. Residues 207–208 (GE), serine 239, 262–264 (SLH), and asparagine 347 contribute to the S-adenosyl-L-methionine site. Cysteine 390 serves as the catalytic S-methylcysteine intermediate.

Belongs to the radical SAM superfamily. RlmN family. It depends on [4Fe-4S] cluster as a cofactor.

The protein resides in the cytoplasm. It carries out the reaction adenosine(2503) in 23S rRNA + 2 reduced [2Fe-2S]-[ferredoxin] + 2 S-adenosyl-L-methionine = 2-methyladenosine(2503) in 23S rRNA + 5'-deoxyadenosine + L-methionine + 2 oxidized [2Fe-2S]-[ferredoxin] + S-adenosyl-L-homocysteine. It catalyses the reaction adenosine(37) in tRNA + 2 reduced [2Fe-2S]-[ferredoxin] + 2 S-adenosyl-L-methionine = 2-methyladenosine(37) in tRNA + 5'-deoxyadenosine + L-methionine + 2 oxidized [2Fe-2S]-[ferredoxin] + S-adenosyl-L-homocysteine. Functionally, specifically methylates position 2 of adenine 2503 in 23S rRNA and position 2 of adenine 37 in tRNAs. This Roseiflexus castenholzii (strain DSM 13941 / HLO8) protein is Probable dual-specificity RNA methyltransferase RlmN.